The primary structure comprises 420 residues: 3-isopropylmalate dehydratase large subunit (420 aa).

[4Fe-4S] cluster-binding residues include cysteine 300, cysteine 360, and cysteine 363.

This sequence belongs to the aconitase/IPM isomerase family. LeuC type 2 subfamily. Heterodimer of LeuC and LeuD. Requires [4Fe-4S] cluster as cofactor.

It carries out the reaction (2R,3S)-3-isopropylmalate = (2S)-2-isopropylmalate. Its pathway is amino-acid biosynthesis; L-leucine biosynthesis; L-leucine from 3-methyl-2-oxobutanoate: step 2/4. Its function is as follows. Catalyzes the isomerization between 2-isopropylmalate and 3-isopropylmalate, via the formation of 2-isopropylmaleate. The chain is 3-isopropylmalate dehydratase large subunit from Helicobacter hepaticus (strain ATCC 51449 / 3B1).